The following is a 1876-amino-acid chain: 1,3-beta-glucan synthase component FKS1 (1876 aa).

2 stretches are compositionally biased toward polar residues: residues 1–25 and 60–71; these read MNTDQQPYQGQTDYTQGPGNGQSQE and QPPNESYDQDYT. The tract at residues 1–108 is disordered; sequence MNTDQQPYQG…PGTPGYDSYG (108 aa). Residues 1–454 lie on the Cytoplasmic side of the membrane; that stretch reads MNTDQQPYQG…WLHLVTNFNR (454 aa). A Glycyl lysine isopeptide (Lys-Gly) (interchain with G-Cter in ubiquitin) cross-link involves residue lysine 259. Phosphothreonine occurs at positions 269 and 272. Residues lysine 275 and lysine 386 each participate in a glycyl lysine isopeptide (Lys-Gly) (interchain with G-Cter in ubiquitin) cross-link. Residues 455–475 traverse the membrane as a helical segment; that stretch reads IWVMHISIFWMYFAYNSPTFY. The Extracellular segment spans residues 476-492; it reads THNYQQLVDNQPLAAYK. Residues 493–513 traverse the membrane as a helical segment; the sequence is WASCALGGTVASLIQIVATLC. Residues 514 to 531 are Cytoplasmic-facing; it reads EWSFVPRKWAGAQHLSRR. A helical membrane pass occupies residues 532–552; sequence FWFLCIIFGINLGPIIFVFAY. Residues 553-563 lie on the Extracellular side of the membrane; that stretch reads DKDTVYSTAAH. The helical transmembrane segment at 564–584 threads the bilayer; sequence VVAAVMFFVAVATIIFFSIMP. The Cytoplasmic segment spans residues 585–621; it reads LGGLFTSYMKKSTRRYVASQTFTAAFAPLHGLDRWMS. A helical membrane pass occupies residues 622 to 642; that stretch reads YLVWVTVFAAKYSESYYFLVL. The Extracellular segment spans residues 643–678; it reads SLRDPIRILSTTAMRCTGEYWWGAVLCKVQPKIVLG. A helical transmembrane segment spans residues 679–699; that stretch reads LVIATDFILFFLDTYLWYIIV. At 700–1358 the chain is on the cytoplasmic side; the sequence is NTIFSVGKSF…QPAVDWVRRY (659 aa). Glycyl lysine isopeptide (Lys-Gly) (interchain with G-Cter in ubiquitin) cross-links involve residues lysine 910 and lysine 915. The helical transmembrane segment at 1359-1379 threads the bilayer; that stretch reads TLSIFIVFWIAFVPIVVQELI. Over 1380-1444 the chain is Extracellular; it reads ERGLWKATQR…RIPFSILYSR (65 aa). The helical transmembrane segment at 1445–1465 threads the bilayer; sequence FAGSAIYMGARSMLMLLFGTV. Residues 1466–1469 are Cytoplasmic-facing; that stretch reads AHWQ. The chain crosses the membrane as a helical span at residues 1470 to 1490; that stretch reads APLLWFWASLSSLIFAPFVFN. The Extracellular segment spans residues 1491–1560; it reads PHQFAWEDFF…DASRAHRTNL (70 aa). Residues lysine 1539 and lysine 1547 each participate in a glycyl lysine isopeptide (Lys-Gly) (interchain with G-Cter in ubiquitin) cross-link. A helical membrane pass occupies residues 1561 to 1581; the sequence is IMAEIIPCAIYAAGCFIAFTF. At 1582–1601 the chain is on the cytoplasmic side; that stretch reads INAQTGVKTTDDDRVNSVLR. A helical transmembrane segment spans residues 1602-1622; the sequence is IIICTLAPIAVNLGVLFFCMG. Residues 1623 to 1643 are Extracellular-facing; it reads MSCCSGPLFGMCCKKTGSVMA. Residues 1644-1664 form a helical membrane-spanning segment; the sequence is GIAHGVAVIVHIAFFIVMWVL. At 1665-1672 the chain is on the cytoplasmic side; that stretch reads ESFNFVRM. Residues 1673 to 1695 form a helical membrane-spanning segment; that stretch reads LIGVVTCIQCQRLIFHCMTALML. Residues 1696–1802 are Extracellular-facing; sequence TREFKNDHAN…RKRMVKKYCS (107 aa). A helical membrane pass occupies residues 1803–1823; it reads LYFLVLAIFAGCIIGPAVASA. Over 1824–1876 the chain is Cytoplasmic; that stretch reads KIHKHIGDSLDGVVHNLFQPINTTNNDTGSQMSTYQSHYYTHTPSLKTWSTIK.

Belongs to the glycosyltransferase 48 family. In terms of assembly, component of the 1,3-beta-glucan synthase (GS) complex, composed of two alternate catalytic subunits FKS1 or GSC2, and a regulatory subunit RHO1. Interacts with RHO1, which is a GTP-binding protein.

The protein resides in the mitochondrion. It is found in the cell membrane. The catalysed reaction is [(1-&gt;3)-beta-D-glucosyl](n) + UDP-alpha-D-glucose = [(1-&gt;3)-beta-D-glucosyl](n+1) + UDP + H(+). Alternate catalytic subunit of the 1,3-beta-glucan synthase (GS) complex. Synthesizes 1,3-beta-glucan, a major structural component of the yeast cell wall. Involved in cell wall synthesis, maintenance and remodeling. The polypeptide is 1,3-beta-glucan synthase component FKS1 (FKS1) (Saccharomyces cerevisiae (strain ATCC 204508 / S288c) (Baker's yeast)).